A 456-amino-acid chain; its full sequence is Anthocyanidin 3-O-glucosyltransferase UFGT (456 aa).

Serine 18 lines the kaempferol pocket. Serine 18 is a binding site for quercetin. Threonine 19 serves as a coordination point for UDP. Threonine 19 provides a ligand contact to UDP-alpha-D-glucose. Positions 20 and 84 each coordinate kaempferol. Catalysis depends on histidine 20, which acts as the Proton acceptor. Glutamine 84 provides a ligand contact to quercetin. Catalysis depends on aspartate 119, which acts as the Charge relay. A UDP-alpha-D-glucose-binding site is contributed by threonine 141. Kaempferol contacts are provided by histidine 150 and glutamine 188. Residues histidine 150 and glutamine 188 each coordinate quercetin. Residues threonine 280, serine 306, tryptophan 332, alanine 333, and histidine 350 each coordinate UDP. Residues threonine 280, serine 306, tryptophan 332, alanine 333, histidine 350, tryptophan 353, asparagine 354, serine 355, and glutamate 358 each coordinate UDP-alpha-D-glucose. The UDP site is built by asparagine 354, serine 355, and glutamate 358. Glycine 373 is a quercetin binding site. Positions 374 and 375 each coordinate UDP-alpha-D-glucose.

It belongs to the UDP-glycosyltransferase family. Detected only in berry skin.

The catalysed reaction is an anthocyanidin + UDP-alpha-D-glucose + H(+) = an anthocyanidin 3-O-beta-D-glucoside + UDP. The enzyme catalyses cyanidin + UDP-alpha-D-glucose = cyanidin 3-O-beta-D-glucoside + UDP + H(+). It catalyses the reaction delphinidin + UDP-alpha-D-glucose = delphinidin 3-O-beta-D-glucoside + UDP. It carries out the reaction peonidin + UDP-alpha-D-glucose = peonidin 3-O-beta-D-glucoside + UDP. The catalysed reaction is pelargonidin + UDP-alpha-D-glucose = pelargonidin 3-O-beta-D-glucoside + UDP. The enzyme catalyses malvidin + UDP-alpha-D-glucose = malvidin 3-O-beta-D-glucoside + UDP. It catalyses the reaction a flavonol + UDP-alpha-D-glucose = a flavonol 3-O-beta-D-glucoside + UDP + H(+). It participates in pigment biosynthesis; anthocyanin biosynthesis. With respect to regulation, inhibited by Mn(2+) and Zn(2+). In the presence of other necessary color factors, this glycosylation reaction allows the accumulation of anthocyanin pigments. Involved in the formation of red wine pigments. UDP-glucose (UDP-Glc) is the physiological sugar donor, and cyanidin is the natural acceptor in vivo. Can glucosylate the anthocyanidins delphinidin, peonidin, pelargonidin and malvidin. The flavonols quercitin and kaempferol can also be glucosylated in vitro, but with glucosylation rates 50-100 times lower than cyanidin. In vitro, can use UDP-Glc, UDP-5SGlc, UDP-Xyl, UDP-Man, UDP-Gal, UDP-GlcNAc, GDP-Glc, dTDP-Glc and dTDP-Xyl as sugar donors, but not UDP-6OMeGal, UDP-Ara, UDP-6FGal, UDP-GlcN, UDP-2FGal, UDP-5SAra, GDP-Man, GDP-Fuc, UDP-Fuc or UDP-Rha. The chain is Anthocyanidin 3-O-glucosyltransferase UFGT from Vitis vinifera (Grape).